Reading from the N-terminus, the 365-residue chain is Peptide chain release factor 2 (365 aa).

At Gln252 the chain carries N5-methylglutamine.

Belongs to the prokaryotic/mitochondrial release factor family. Methylated by PrmC. Methylation increases the termination efficiency of RF2.

The protein resides in the cytoplasm. Peptide chain release factor 2 directs the termination of translation in response to the peptide chain termination codons UGA and UAA. In Yersinia pseudotuberculosis serotype O:1b (strain IP 31758), this protein is Peptide chain release factor 2.